The following is a 438-amino-acid chain: MYAENITNAVEIQDIRAREILDSRGNPTIEADVILADGSMGRAAAPSGASTGSREALELRDGDKSRYLGKGVTKAVANVNSQIRSALLESDATDQQGIDNILIELDGTANKDHLGANAMLAVSLATAKAAAISQNLPLHQYIANLRGQTSLTMPVPMMNILNGGEHADNTVDIQEFMIEPTGFSSFSEALRAGVEIFHSLKSVLKSQGLNTAVGDEGGFAPNLRTNEEAITVIMQAIEQAGYKAGKDIHLALDCAASEFYKNGQYILAGEGNKTFDSQGFSDYLVKLTEQYPIISIEDGLDESDWEGWAYLTSKLGKKVQLVGDDLFVTNPAILQEGIDKQIANAILIKFNQIGTLSETLDAIYLAKKNGYATVISHRSGETEDSTIADLAVGTAAGQIKTGSLCRSDRVAKYNQLLRIEQQVRASYRGGEEFIGLRG.

Glutamine 174 lines the (2R)-2-phosphoglycerate pocket. Residue glutamate 216 is the Proton donor of the active site. Residues aspartate 253, glutamate 297, and aspartate 324 each coordinate Mg(2+). Residues lysine 349, arginine 378, serine 379, and lysine 400 each coordinate (2R)-2-phosphoglycerate. Residue lysine 349 is the Proton acceptor of the active site.

This sequence belongs to the enolase family. In terms of assembly, component of the RNA degradosome, a multiprotein complex involved in RNA processing and mRNA degradation. Mg(2+) is required as a cofactor.

It is found in the cytoplasm. Its subcellular location is the secreted. The protein resides in the cell surface. It catalyses the reaction (2R)-2-phosphoglycerate = phosphoenolpyruvate + H2O. It participates in carbohydrate degradation; glycolysis; pyruvate from D-glyceraldehyde 3-phosphate: step 4/5. Functionally, catalyzes the reversible conversion of 2-phosphoglycerate (2-PG) into phosphoenolpyruvate (PEP). It is essential for the degradation of carbohydrates via glycolysis. This is Enolase from Psychrobacter sp. (strain PRwf-1).